Reading from the N-terminus, the 354-residue chain is Holliday junction branch migration complex subunit RuvB (354 aa).

The disordered stretch occupies residues 1 to 24 (MSIQTDDFAPVPPPKRVVSAAPTS). Residues 5–195 (TDDFAPVPPP…FGIVARLEFY (191 aa)) form a large ATPase domain (RuvB-L) region. ATP contacts are provided by residues L34, R35, G76, K79, T80, T81, 142–144 (EDY), R185, Y195, and R232. Position 80 (T80) interacts with Mg(2+). Residues 196-266 (TPEELSRIVT…IAQRALAMLD (71 aa)) form a small ATPAse domain (RuvB-S) region. Positions 269–354 (PQGFDVMDRK…RQHTDLFGPA (86 aa)) are head domain (RuvB-H). Residues R324 and R329 each contribute to the DNA site.

This sequence belongs to the RuvB family. Homohexamer. Forms an RuvA(8)-RuvB(12)-Holliday junction (HJ) complex. HJ DNA is sandwiched between 2 RuvA tetramers; dsDNA enters through RuvA and exits via RuvB. An RuvB hexamer assembles on each DNA strand where it exits the tetramer. Each RuvB hexamer is contacted by two RuvA subunits (via domain III) on 2 adjacent RuvB subunits; this complex drives branch migration. In the full resolvosome a probable DNA-RuvA(4)-RuvB(12)-RuvC(2) complex forms which resolves the HJ.

The protein resides in the cytoplasm. It catalyses the reaction ATP + H2O = ADP + phosphate + H(+). Functionally, the RuvA-RuvB-RuvC complex processes Holliday junction (HJ) DNA during genetic recombination and DNA repair, while the RuvA-RuvB complex plays an important role in the rescue of blocked DNA replication forks via replication fork reversal (RFR). RuvA specifically binds to HJ cruciform DNA, conferring on it an open structure. The RuvB hexamer acts as an ATP-dependent pump, pulling dsDNA into and through the RuvAB complex. RuvB forms 2 homohexamers on either side of HJ DNA bound by 1 or 2 RuvA tetramers; 4 subunits per hexamer contact DNA at a time. Coordinated motions by a converter formed by DNA-disengaged RuvB subunits stimulates ATP hydrolysis and nucleotide exchange. Immobilization of the converter enables RuvB to convert the ATP-contained energy into a lever motion, pulling 2 nucleotides of DNA out of the RuvA tetramer per ATP hydrolyzed, thus driving DNA branch migration. The RuvB motors rotate together with the DNA substrate, which together with the progressing nucleotide cycle form the mechanistic basis for DNA recombination by continuous HJ branch migration. Branch migration allows RuvC to scan DNA until it finds its consensus sequence, where it cleaves and resolves cruciform DNA. This chain is Holliday junction branch migration complex subunit RuvB, found in Paracidovorax citrulli (strain AAC00-1) (Acidovorax citrulli).